The chain runs to 310 residues: MTNPAETARPERQRKPDWIRVKAPTSKGYGETRALMRELGLNTVCEEAACPNIGECWTKKHATVMILGDVCTRACAFCNVKTGMPRAVDPMEPINVATAAAKMGLEHIVITSVDRDDLPDGGAGHFVKVIKALRELTPNTTIEILTPDFRNKMEAAVESIVEAGPDVYNHNLETVPRLYPTIRPGARYYASLRLLEQVKRHDPRIFTKSGVMLGLGEERLEVHQVMDDMRSAQIDFLTMGQYLQPTPKHAKVIEFVTPKAFDAYGSIARAKGFLQVAASPLTRSSYHAGEDFRQMRQAREAQLAKAAQKA.

Residues Cys45, Cys50, Cys56, Cys71, Cys75, Cys78, and Ser285 each coordinate [4Fe-4S] cluster. Residues 57–274 (WTKKHATVMI…GSIARAKGFL (218 aa)) form the Radical SAM core domain.

The protein belongs to the radical SAM superfamily. Lipoyl synthase family. [4Fe-4S] cluster serves as cofactor.

The protein localises to the cytoplasm. It catalyses the reaction [[Fe-S] cluster scaffold protein carrying a second [4Fe-4S](2+) cluster] + N(6)-octanoyl-L-lysyl-[protein] + 2 oxidized [2Fe-2S]-[ferredoxin] + 2 S-adenosyl-L-methionine + 4 H(+) = [[Fe-S] cluster scaffold protein] + N(6)-[(R)-dihydrolipoyl]-L-lysyl-[protein] + 4 Fe(3+) + 2 hydrogen sulfide + 2 5'-deoxyadenosine + 2 L-methionine + 2 reduced [2Fe-2S]-[ferredoxin]. Its pathway is protein modification; protein lipoylation via endogenous pathway; protein N(6)-(lipoyl)lysine from octanoyl-[acyl-carrier-protein]: step 2/2. Catalyzes the radical-mediated insertion of two sulfur atoms into the C-6 and C-8 positions of the octanoyl moiety bound to the lipoyl domains of lipoate-dependent enzymes, thereby converting the octanoylated domains into lipoylated derivatives. This is Lipoyl synthase from Novosphingobium aromaticivorans (strain ATCC 700278 / DSM 12444 / CCUG 56034 / CIP 105152 / NBRC 16084 / F199).